A 172-amino-acid polypeptide reads, in one-letter code: Nicotinamide-nucleotide adenylyltransferase (172 aa).

This sequence belongs to the archaeal NMN adenylyltransferase family.

The protein localises to the cytoplasm. It carries out the reaction beta-nicotinamide D-ribonucleotide + ATP + H(+) = diphosphate + NAD(+). Its pathway is cofactor biosynthesis; NAD(+) biosynthesis; NAD(+) from nicotinamide D-ribonucleotide: step 1/1. The sequence is that of Nicotinamide-nucleotide adenylyltransferase from Aeropyrum pernix (strain ATCC 700893 / DSM 11879 / JCM 9820 / NBRC 100138 / K1).